Reading from the N-terminus, the 46-residue chain is uncharacterized protein (46 aa).

This sequence to equivalent protein in phage 82.

This is an uncharacterized protein from Escherichia coli (strain K12).